An 842-amino-acid polypeptide reads, in one-letter code: Protein translocase subunit SecA (842 aa).

ATP is bound by residues glutamine 85, 103 to 107, and aspartate 493; that span reads GEGKT. Zn(2+)-binding residues include cysteine 825, cysteine 827, cysteine 836, and histidine 837.

Belongs to the SecA family. In terms of assembly, monomer and homodimer. Part of the essential Sec protein translocation apparatus which comprises SecA, SecYEG and auxiliary proteins SecDF. Other proteins may also be involved. It depends on Zn(2+) as a cofactor.

It localises to the cell membrane. The protein resides in the cytoplasm. It catalyses the reaction ATP + H2O + cellular proteinSide 1 = ADP + phosphate + cellular proteinSide 2.. Functionally, part of the Sec protein translocase complex. Interacts with the SecYEG preprotein conducting channel. Has a central role in coupling the hydrolysis of ATP to the transfer of proteins into and across the cell membrane, serving as an ATP-driven molecular motor driving the stepwise translocation of polypeptide chains across the membrane. This is Protein translocase subunit SecA from Streptococcus equi subsp. equi (strain 4047).